We begin with the raw amino-acid sequence, 88 residues long: Histone H2A-beta, sperm (88 aa).

The protein belongs to the histone H2A family. The nucleosome is a histone octamer containing two molecules each of H2A, H2B, H3 and H4 assembled in one H3-H4 heterotetramer and two H2A-H2B heterodimers. The octamer wraps approximately 147 bp of DNA. Monoubiquitination in C-terminus gives a specific tag for epigenetic transcriptional repression.

The protein resides in the nucleus. It is found in the chromosome. Its function is as follows. Core component of nucleosome. Nucleosomes wrap and compact DNA into chromatin, limiting DNA accessibility to the cellular machineries which require DNA as a template. Histones thereby play a central role in transcription regulation, DNA repair, DNA replication and chromosomal stability. DNA accessibility is regulated via a complex set of post-translational modifications of histones, also called histone code, and nucleosome remodeling. In Strongylocentrotus purpuratus (Purple sea urchin), this protein is Histone H2A-beta, sperm.